Reading from the N-terminus, the 573-residue chain is uncharacterized protein (573 aa).

Disordered regions lie at residues 1 to 33 (MLQQGSSSRRSLHGNDFHTLTSPSRRDSLSIPR) and 60 to 101 (LVAN…SRYD). Polar residues predominate over residues 60 to 70 (LVANRSDNNGN). Asparagine 63 is a glycosylation site (N-linked (GlcNAc...) asparagine). A compositionally biased stretch (low complexity) spans 84-95 (SSSTSSLPSTRN). Tandem repeats lie at residues 102–103 (NM), 104–105 (NM), 106–107 (NM), 108–109 (NM), 110–111 (NM), 112–113 (NM), 114–115 (NM), 116–117 (NM), 118–119 (NM), and 120–121 (NM). Positions 102–121 (NMNMNMNMNMNMNMNMNMNM) are 10 X 2 AA tandem repeats of N-M. The N-linked (GlcNAc...) asparagine glycan is linked to asparagine 123. 4 disordered regions span residues 150 to 174 (IPEKYSGSRYSLRSSPPTYSNPRVR), 192 to 271 (QFPN…IRSN), 286 to 317 (KSSNSADSVEENSKTKQKRKNPERVVPEPITS), and 357 to 379 (NNRIPVLPPPRSPNRPTLSDKRT). Residues 157–170 (SRYSLRSSPPTYSN) show a composition bias toward polar residues. Over residues 208-225 (LPPSSTFPDSPSSSSLPL) the composition is skewed to low complexity. A compositionally biased stretch (polar residues) spans 226 to 252 (TQTGGPSSADNDSIATGTNNRSPQQTK). A glycan (N-linked (GlcNAc...) asparagine) is linked at asparagine 236. Residues asparagine 437 and asparagine 442 are each glycosylated (N-linked (GlcNAc...) asparagine). Low complexity-rich tracts occupy residues 441–457 (INSSISSPAPSSSSSSS) and 466–483 (SISSSPTPAPSSGSSKSK). A disordered region spans residues 441–483 (INSSISSPAPSSSSSSSLVSRGPMQSISSSPTPAPSSGSSKSK). Residues asparagine 498, asparagine 535, and asparagine 541 are each glycosylated (N-linked (GlcNAc...) asparagine).

This sequence to yeast AFR1. In terms of processing, N-glycosylated.

This is an uncharacterized protein from Saccharomyces cerevisiae (strain ATCC 204508 / S288c) (Baker's yeast).